Reading from the N-terminus, the 122-residue chain is Large ribosomal subunit protein uL14 (122 aa).

The protein belongs to the universal ribosomal protein uL14 family. Part of the 50S ribosomal subunit. Forms a cluster with proteins L3 and L19. In the 70S ribosome, L14 and L19 interact and together make contacts with the 16S rRNA in bridges B5 and B8.

Binds to 23S rRNA. Forms part of two intersubunit bridges in the 70S ribosome. This is Large ribosomal subunit protein uL14 from Caldanaerobacter subterraneus subsp. tengcongensis (strain DSM 15242 / JCM 11007 / NBRC 100824 / MB4) (Thermoanaerobacter tengcongensis).